Here is a 292-residue protein sequence, read N- to C-terminus: tRNA (guanine-N(1)-)-methyltransferase (292 aa).

S-adenosyl-L-methionine is bound by residues glycine 151 and 175 to 180; that span reads IGDYVL.

The protein belongs to the RNA methyltransferase TrmD family. Homodimer.

Its subcellular location is the cytoplasm. It catalyses the reaction guanosine(37) in tRNA + S-adenosyl-L-methionine = N(1)-methylguanosine(37) in tRNA + S-adenosyl-L-homocysteine + H(+). Functionally, specifically methylates guanosine-37 in various tRNAs. The protein is tRNA (guanine-N(1)-)-methyltransferase of Corynebacterium diphtheriae (strain ATCC 700971 / NCTC 13129 / Biotype gravis).